The chain runs to 238 residues: 1-(5-phosphoribosyl)-5-[(5-phosphoribosylamino)methylideneamino] imidazole-4-carboxamide isomerase (238 aa).

The Proton acceptor role is filled by Asp8. The active-site Proton donor is the Asp129.

It belongs to the HisA/HisF family.

It is found in the cytoplasm. The catalysed reaction is 1-(5-phospho-beta-D-ribosyl)-5-[(5-phospho-beta-D-ribosylamino)methylideneamino]imidazole-4-carboxamide = 5-[(5-phospho-1-deoxy-D-ribulos-1-ylimino)methylamino]-1-(5-phospho-beta-D-ribosyl)imidazole-4-carboxamide. Its pathway is amino-acid biosynthesis; L-histidine biosynthesis; L-histidine from 5-phospho-alpha-D-ribose 1-diphosphate: step 4/9. The chain is 1-(5-phosphoribosyl)-5-[(5-phosphoribosylamino)methylideneamino] imidazole-4-carboxamide isomerase from Clostridium novyi (strain NT).